The following is a 98-amino-acid chain: Large ribosomal subunit protein uL23 (98 aa).

It belongs to the universal ribosomal protein uL23 family. As to quaternary structure, part of the 50S ribosomal subunit. Contacts protein L29, and trigger factor when it is bound to the ribosome.

Functionally, one of the early assembly proteins it binds 23S rRNA. One of the proteins that surrounds the polypeptide exit tunnel on the outside of the ribosome. Forms the main docking site for trigger factor binding to the ribosome. In Rickettsia rickettsii (strain Iowa), this protein is Large ribosomal subunit protein uL23.